Reading from the N-terminus, the 150-residue chain is UPF0506 protein SJCHGC09643 (150 aa).

A signal peptide spans 1–18 (MNTCIQLLILCLVTVINS). Residues N20, N32, N48, and N110 are each glycosylated (N-linked (GlcNAc...) asparagine). Disulfide bonds link C116-C130, C123-C134, and C129-C139.

The protein belongs to the UPF0506 family.

It is found in the secreted. This chain is UPF0506 protein SJCHGC09643, found in Schistosoma japonicum (Blood fluke).